Consider the following 240-residue polypeptide: Probable transcriptional regulatory protein YrbC (240 aa).

The protein belongs to the TACO1 family.

The protein localises to the cytoplasm. In Bacillus subtilis (strain 168), this protein is Probable transcriptional regulatory protein YrbC (yrbC).